The following is a 183-amino-acid chain: Capsid protein (183 aa).

Residues 136–183 (NAPILSTLPETTVVRRRGRSPRRRTPSPRRRRSQSPRRRRSQSPASQC) are disordered. Basic residues predominate over residues 149-176 (VRRRGRSPRRRTPSPRRRRSQSPRRRRS). Phosphoserine; by host occurs at positions 155, 162, and 170. A 1; half-length repeat occupies 155-161 (SPRRRTP). Residues 155 to 177 (SPRRRTPSPRRRRSQSPRRRRSQ) form a 3 X 8 AA repeats of S-P-R-R-R-[PR]-S-Q region. The Bipartite nuclear localization signal motif lies at 158–175 (RRTPSPRRRRSQSPRRRR). 2 consecutive repeat copies span residues 162 to 169 (SPRRRRSQ) and 170 to 177 (SPRRRRSQ). The tract at residues 177–183 (QSPASQC) is RNA binding.

It belongs to the orthohepadnavirus core antigen family. Homodimerizes, then multimerizes. Interacts with cytosol exposed regions of viral L glycoprotein present in the reticulum-to-Golgi compartment. Interacts with human FLNB. Phosphorylated form interacts with host importin alpha; this interaction depends on the exposure of the NLS, which itself depends upon genome maturation and/or phosphorylation of the capsid protein. Interacts with host NUP153. Post-translationally, phosphorylated by host SRPK1, SRPK2, and maybe protein kinase C or GAPDH. Phosphorylation is critical for pregenomic RNA packaging. Protein kinase C phosphorylation is stimulated by HBx protein and may play a role in transport of the viral genome to the nucleus at the late step during the viral replication cycle.

Its subcellular location is the virion. The protein localises to the host cytoplasm. Functionally, self assembles to form an icosahedral capsid. Most capsids appear to be large particles with an icosahedral symmetry of T=4 and consist of 240 copies of capsid protein, though a fraction forms smaller T=3 particles consisting of 180 capsid proteins. Entering capsids are transported along microtubules to the nucleus. Phosphorylation of the capsid is thought to induce exposure of nuclear localization signal in the C-terminal portion of the capsid protein that allows binding to the nuclear pore complex via the importin (karyopherin-) alpha and beta. Capsids are imported in intact form through the nuclear pore into the nuclear basket, where it probably binds NUP153. Only capsids that contain the mature viral genome can release the viral DNA and capsid protein into the nucleoplasm. Immature capsids get stuck in the basket. Capsids encapsulate the pre-genomic RNA and the P protein. Pre-genomic RNA is reverse-transcribed into DNA while the capsid is still in the cytoplasm. The capsid can then either be directed to the nucleus, providing more genomes for transcription, or bud through the endoplasmic reticulum to provide new virions. This chain is Capsid protein, found in Pan troglodytes (Chimpanzee).